We begin with the raw amino-acid sequence, 113 residues long: Large ribosomal subunit protein bL19m (113 aa).

Belongs to the bacterial ribosomal protein bL19 family.

The protein resides in the mitochondrion. The polypeptide is Large ribosomal subunit protein bL19m (RPL19) (Reclinomonas americana).